Here is a 99-residue protein sequence, read N- to C-terminus: UPF0235 protein PM1313 (99 aa).

This sequence belongs to the UPF0235 family.

The polypeptide is UPF0235 protein PM1313 (Pasteurella multocida (strain Pm70)).